Here is a 276-residue protein sequence, read N- to C-terminus: Putative hydro-lyase Xaut_1503 (276 aa).

Belongs to the D-glutamate cyclase family.

This chain is Putative hydro-lyase Xaut_1503, found in Xanthobacter autotrophicus (strain ATCC BAA-1158 / Py2).